The following is an 89-amino-acid chain: Small ribosomal subunit protein bS20 (89 aa).

Positions 1 to 20 are disordered; that stretch reads MANHKSAEKRARQTIKRTER.

This sequence belongs to the bacterial ribosomal protein bS20 family.

In terms of biological role, binds directly to 16S ribosomal RNA. This is Small ribosomal subunit protein bS20 from Campylobacter concisus (strain 13826).